The chain runs to 383 residues: Creatine kinase, testis isozyme (383 aa).

Residues 14–100 (KRLSPEEEFP…LDPIIEDRHG (87 aa)) form the Phosphagen kinase N-terminal domain. Residues 99–112 (HGGYKPTDKHKTDL) are compositionally biased toward basic and acidic residues. Positions 99–119 (HGGYKPTDKHKTDLNPDNLKG) are disordered. A Phosphagen kinase C-terminal domain is found at 127–369 (YVISSRVRTG…KLLVEMEKKL (243 aa)). ATP contacts are provided by residues 130 to 134 (SSRVR), His-193, Arg-238, Arg-294, 322 to 327 (RGTGGV), and Asp-337.

Belongs to the ATP:guanido phosphotransferase family. Exists in many tissues, but preferentially in testis.

The enzyme catalyses creatine + ATP = N-phosphocreatine + ADP + H(+). In terms of biological role, reversibly catalyzes the transfer of phosphate between ATP and various phosphogens (e.g. creatine phosphate). Creatine kinase isoenzymes play a central role in energy transduction in tissues with large, fluctuating energy demands, such as skeletal muscle, heart, brain and spermatozoa. The chain is Creatine kinase, testis isozyme (tck1) from Oncorhynchus mykiss (Rainbow trout).